The following is a 205-amino-acid chain: Proteasome subunit beta type-3 (205 aa).

At serine 2 the chain carries N-acetylserine. Lysine 77 carries the N6-acetyllysine modification.

The protein belongs to the peptidase T1B family. As to quaternary structure, the 26S proteasome consists of a 20S proteasome core and two 19S regulatory subunits. The 20S proteasome core is a barrel-shaped complex made of 28 subunits that are arranged in four stacked rings. The two outer rings are each formed by seven alpha subunits, and the two inner rings are formed by seven beta subunits. The proteolytic activity is exerted by three beta-subunits PSMB5, PSMB6 and PSMB7. In terms of assembly, (Microbial infection) Interacts with HIV-1 TAT protein.

It is found in the cytoplasm. The protein localises to the nucleus. Functionally, non-catalytic component of the 20S core proteasome complex involved in the proteolytic degradation of most intracellular proteins. This complex plays numerous essential roles within the cell by associating with different regulatory particles. Associated with two 19S regulatory particles, forms the 26S proteasome and thus participates in the ATP-dependent degradation of ubiquitinated proteins. The 26S proteasome plays a key role in the maintenance of protein homeostasis by removing misfolded or damaged proteins that could impair cellular functions, and by removing proteins whose functions are no longer required. Associated with the PA200 or PA28, the 20S proteasome mediates ubiquitin-independent protein degradation. This type of proteolysis is required in several pathways including spermatogenesis (20S-PA200 complex) or generation of a subset of MHC class I-presented antigenic peptides (20S-PA28 complex). This chain is Proteasome subunit beta type-3, found in Homo sapiens (Human).